We begin with the raw amino-acid sequence, 432 residues long: Cyclic 2,3-diphosphoglycerate synthetase (432 aa).

This sequence belongs to the cyclic 2,3-diphosphoglycerate synthetase family.

The protein resides in the cytoplasm. The catalysed reaction is (2R)-2,3-bisphosphoglycerate + ATP + H(+) = cyclic (2R)-2,3-bisphosphoglycerate + ADP + phosphate. In terms of biological role, catalyzes the formation of cyclic 2,3-diphosphoglycerate (cDPG) by formation of an intramolecular phosphoanhydride bond at the expense of ATP. This is Cyclic 2,3-diphosphoglycerate synthetase from Thermococcus onnurineus (strain NA1).